The following is a 303-amino-acid chain: 1D-myo-inositol 2-acetamido-2-deoxy-alpha-D-glucopyranoside deacetylase 1 (303 aa).

Zn(2+)-binding residues include His-15, Asp-18, and His-157.

Belongs to the MshB deacetylase family. Zn(2+) is required as a cofactor.

The catalysed reaction is 1D-myo-inositol 2-acetamido-2-deoxy-alpha-D-glucopyranoside + H2O = 1D-myo-inositol 2-amino-2-deoxy-alpha-D-glucopyranoside + acetate. Catalyzes the deacetylation of 1D-myo-inositol 2-acetamido-2-deoxy-alpha-D-glucopyranoside (GlcNAc-Ins) in the mycothiol biosynthesis pathway. In Saccharopolyspora erythraea (strain ATCC 11635 / DSM 40517 / JCM 4748 / NBRC 13426 / NCIMB 8594 / NRRL 2338), this protein is 1D-myo-inositol 2-acetamido-2-deoxy-alpha-D-glucopyranoside deacetylase 1.